The chain runs to 477 residues: UDP-galactose-lipid carrier transferase (477 aa).

The next 6 membrane-spanning stretches (helical) occupy residues 16 to 36 (SLAL…IVLI), 52 to 72 (LDLK…WFWV), 93 to 113 (TILI…WELS), 115 to 135 (WIWI…RACV), 175 to 195 (VIAF…GVPV), and 284 to 304 (FDLV…VILI). Over 305-477 (FMVSRDGGAP…GVVLKRDGAY (173 aa)) the chain is Cytoplasmic.

Belongs to the bacterial sugar transferase family.

The protein resides in the cell membrane. Its pathway is glycan metabolism; exopolysaccharide biosynthesis. Functionally, involved in the biosynthesis of amylovoran which functions as a virulence factor. May act as a sugar transferase and may be involved in the export of the repeating unit by flipping the lipid carrier to the periplasmic face of the inner membrane. This chain is UDP-galactose-lipid carrier transferase (amsG), found in Erwinia amylovora (Fire blight bacteria).